We begin with the raw amino-acid sequence, 266 residues long: E3 ubiquitin-protein ligase RNF170 (266 aa).

Residues 1–26 are Lumenal-facing; that stretch reads MEGSVCVDGAAAPAPDEASLIEGVSN. A helical membrane pass occupies residues 27–47; that stretch reads AVLLVLVLSVTLLAGLTTLLC. Residues 48 to 209 are Cytoplasmic-facing; that stretch reads RSEQQRIHPE…GGLFWMFRVR (162 aa). Residues 88 to 131 form an RING-type zinc finger; that stretch reads CPVCLQQAVLPVETNCGHLFCGSCIIAYWRYGTWLGAISCPICR. A helical membrane pass occupies residues 210–230; it reads ILLCVCGALAYLVSPLDFLPE. A topological domain (lumenal) is located at residue Gly231. A helical transmembrane segment spans residues 232–252; sequence VLGLLGFLDDFFVILLLFIYI. Over 253–266 the chain is Cytoplasmic; that stretch reads SIMYREVVTQRLAG.

Highly expressed in the developing brain, and less within intersomitic structures of the trunk.

It is found in the endoplasmic reticulum membrane. The catalysed reaction is S-ubiquitinyl-[E2 ubiquitin-conjugating enzyme]-L-cysteine + [acceptor protein]-L-lysine = [E2 ubiquitin-conjugating enzyme]-L-cysteine + N(6)-ubiquitinyl-[acceptor protein]-L-lysine.. It participates in protein modification; protein ubiquitination. In terms of biological role, E3 ubiquitin-protein ligase that plays an essential role in stimulus-induced inositol 1,4,5-trisphosphate receptor (ITPR) ubiquitination and degradation via the endoplasmic reticulum-associated degradation (ERAD) pathway. Also involved in ITPR turnover in resting cells. The chain is E3 ubiquitin-protein ligase RNF170 (rnf170) from Danio rerio (Zebrafish).